A 1217-amino-acid chain; its full sequence is Splicing factor 3B subunit 3 (1217 aa).

Interaction with PHF5A, SF3B1 and SF3B5 regions lie at residues 105–119 (ETFG…VPGQ) and 145–168 (NRDA…TLVY). Position 156 is a phosphoserine (Ser156). Interaction with SF3B1 and SF3B5 stretches follow at residues 193–231 (DNDP…LEEH) and 786–804 (RKFV…ETDH). The interaction with SF3B1 stretch occupies residues 1028–1049 (TYPRWVTTASLLDYDTVAGADK). The segment at 1100–1123 (TVLSLQKTTLIPGGSESLVYTTLS) is interaction with SF3B5. At Thr1200 the chain carries Phosphothreonine.

The protein belongs to the RSE1 family. As to quaternary structure, component of the 17S U2 SnRNP complex, a ribonucleoprotein complex that contains small nuclear RNA (snRNA) U2 and a number of specific proteins. Part of the SF3B subcomplex of the 17S U2 SnRNP complex. SF3B associates with the splicing subcomplex SF3A and a 12S RNA unit to form the U2 small nuclear ribonucleoproteins complex (U2 snRNP). Within the SF3B subcomplex, interacts directly with SF3B1 (via HEAT domain), SF3B5 and PHF5A. Identified in the spliceosome A complex; remains associated with the spliceosome throughout the splicing process. Component of the spliceosome B complex. Identified in the spliceosome C complex. Identified in the spliceosome E complex. Component of the minor (U12-type spliceosome) spliceosome. Within this complex, interacts with SCNM1. Associates with the STAGA transcription coactivator-HAT complex. Interacts with SUPT3H. Interacts with TAF3.

The protein localises to the nucleus. Its function is as follows. Component of the 17S U2 SnRNP complex of the spliceosome, a large ribonucleoprotein complex that removes introns from transcribed pre-mRNAs. The 17S U2 SnRNP complex (1) directly participates in early spliceosome assembly and (2) mediates recognition of the intron branch site during pre-mRNA splicing by promoting the selection of the pre-mRNA branch-site adenosine, the nucleophile for the first step of splicing. Within the 17S U2 SnRNP complex, SF3B3 is part of the SF3B subcomplex, which is required for 'A' complex assembly formed by the stable binding of U2 snRNP to the branchpoint sequence in pre-mRNA. Sequence independent binding of SF3A and SF3B subcomplexes upstream of the branch site is essential, it may anchor U2 snRNP to the pre-mRNA. May also be involved in the assembly of the 'E' complex. Also acts as a component of the minor spliceosome, which is involved in the splicing of U12-type introns in pre-mRNAs. This chain is Splicing factor 3B subunit 3 (SF3B3), found in Pongo abelii (Sumatran orangutan).